The chain runs to 841 residues: DNA ligase (841 aa).

Residues D33–D37, S82–L83, and E114 contribute to the NAD(+) site. The active-site N6-AMP-lysine intermediate is the K116. 4 residues coordinate NAD(+): R137, E174, K300, and K324. 4 residues coordinate Zn(2+): C418, C421, C436, and C442. Positions E758 to R841 constitute a BRCT domain.

This sequence belongs to the NAD-dependent DNA ligase family. LigA subfamily. It depends on Mg(2+) as a cofactor. Requires Mn(2+) as cofactor.

It catalyses the reaction NAD(+) + (deoxyribonucleotide)n-3'-hydroxyl + 5'-phospho-(deoxyribonucleotide)m = (deoxyribonucleotide)n+m + AMP + beta-nicotinamide D-nucleotide.. Its function is as follows. DNA ligase that catalyzes the formation of phosphodiester linkages between 5'-phosphoryl and 3'-hydroxyl groups in double-stranded DNA using NAD as a coenzyme and as the energy source for the reaction. It is essential for DNA replication and repair of damaged DNA. This Xanthomonas oryzae pv. oryzae (strain KACC10331 / KXO85) protein is DNA ligase.